Here is a 215-residue protein sequence, read N- to C-terminus: Octanoyltransferase (215 aa).

Positions 35-210 (PDTPDQLWVV…HCLEAIVEYG (176 aa)) constitute a BPL/LPL catalytic domain. Residues 74 to 81 (RGGQVTYH), 141 to 143 (SVG), and 154 to 156 (GLA) each bind substrate. Catalysis depends on cysteine 172, which acts as the Acyl-thioester intermediate.

The protein belongs to the LipB family.

The protein localises to the cytoplasm. The enzyme catalyses octanoyl-[ACP] + L-lysyl-[protein] = N(6)-octanoyl-L-lysyl-[protein] + holo-[ACP] + H(+). It participates in protein modification; protein lipoylation via endogenous pathway; protein N(6)-(lipoyl)lysine from octanoyl-[acyl-carrier-protein]: step 1/2. Its function is as follows. Catalyzes the transfer of endogenously produced octanoic acid from octanoyl-acyl-carrier-protein onto the lipoyl domains of lipoate-dependent enzymes. Lipoyl-ACP can also act as a substrate although octanoyl-ACP is likely to be the physiological substrate. This chain is Octanoyltransferase, found in Alkalilimnicola ehrlichii (strain ATCC BAA-1101 / DSM 17681 / MLHE-1).